A 175-amino-acid polypeptide reads, in one-letter code: Large ribosomal subunit protein uL6 (175 aa).

The protein belongs to the universal ribosomal protein uL6 family. Part of the 50S ribosomal subunit.

In terms of biological role, this protein binds to the 23S rRNA, and is important in its secondary structure. It is located near the subunit interface in the base of the L7/L12 stalk, and near the tRNA binding site of the peptidyltransferase center. This Xylella fastidiosa (strain 9a5c) protein is Large ribosomal subunit protein uL6.